A 94-amino-acid polypeptide reads, in one-letter code: Small ribosomal subunit protein uS19 (94 aa).

Belongs to the universal ribosomal protein uS19 family.

Protein S19 forms a complex with S13 that binds strongly to the 16S ribosomal RNA. The chain is Small ribosomal subunit protein uS19 from Halothermothrix orenii (strain H 168 / OCM 544 / DSM 9562).